Here is a 275-residue protein sequence, read N- to C-terminus: Galaxin-2 (275 aa).

The first 20 residues, 1–20 (MTRFTSIGLCAVLLFNVCSC), serve as a signal peptide directing secretion.

Component of the acid-insoluble and acid-soluble organic matrix of the aragonitic skeleton (at protein level).

It is found in the secreted. This chain is Galaxin-2, found in Acropora millepora (Staghorn coral).